Consider the following 311-residue polypeptide: Regulator of rDNA transcription protein 6 (311 aa).

The next 2 helical transmembrane spans lie at 32–52 (PHLL…SAEL) and 271–291 (YLIV…IIVT).

It localises to the membrane. May be involved in the modulation of rDNA transcription. The polypeptide is Regulator of rDNA transcription protein 6 (RRT6) (Saccharomyces cerevisiae (strain ATCC 204508 / S288c) (Baker's yeast)).